Consider the following 709-residue polypeptide: Copper amine oxidase vicK1 (709 aa).

The first 20 residues, 1-20 (MKLFLLFTLTLVNIFSVSLQ), serve as a signal peptide directing secretion. Aspartate 365 functions as the Proton acceptor in the catalytic mechanism. A disulfide bridge connects residues cysteine 383 and cysteine 408. Catalysis depends on tyrosine 448, which acts as the Schiff-base intermediate with substrate; via topaquinone. Tyrosine 448 is modified (2',4',5'-topaquinone). Cu cation contacts are provided by histidine 496 and histidine 498. Ca(2+) is bound by residues aspartate 505, leucine 506, aspartate 507, glutamate 548, phenylalanine 641, glutamate 645, aspartate 651, and leucine 652. Position 662 (histidine 662) interacts with Cu cation.

This sequence belongs to the copper/topaquinone oxidase family. Homodimer; disulfide-linked. It depends on Cu cation as a cofactor. Ca(2+) is required as a cofactor. L-topaquinone serves as cofactor. In terms of processing, topaquinone (TPQ) is generated by copper-dependent autoxidation of a specific tyrosyl residue.

The protein operates within mycotoxin biosynthesis. Its function is as follows. Copper amine oxidase, part of the gene cluster that mediates the biosynthesis of the secondary metabolite victorin, the molecular basis for Victoria blight of oats. Within the pathway, vicK1 catalyzes the oxidative deamination of the N-terminal glycyl moiety of the hexapeptides in order to produce the active glyoxylate form victorins. The pathway starts with the processing of the precursor vicA1 by several endopeptidases including kexin proteases as well as the cluster-specific S28 family peptidases vicPa and vicPb to produce 7 identical copies of the hexapeptide Gly-Leu-Lys-Leu-Ala-Phe. After being excised from the precursor peptide, the core peptides are cyclized and modified post-translationally by enzymes encoded within the gene cluster. The ustYa family oxidase vicYb is required for the formation of the macrocycle in victorin and the copper amine oxidases (CAOs) vicK1 and vicK2 are responsible for converting victorin to the active form by oxidizing the N-terminal glycyl residue in the peptides to glyoxylate. Relaxed substrate specificity of enzymes in the victorin biosynthetic pathway results in a metabolic grid that produces a set of analogs including victorinines B, C, E or HV-toxin M. The polypeptide is Copper amine oxidase vicK1 (Bipolaris victoriae (strain FI3) (Victoria blight of oats agent)).